A 295-amino-acid chain; its full sequence is Acetyl-coenzyme A carboxylase carboxyl transferase subunit beta (295 aa).

The segment at 1–20 (MSWLSKLMPSGIRTENTPAK) is disordered. A CoA carboxyltransferase N-terminal domain is found at 28-295 (LWEKCSNCGS…QPHPQDADAA (268 aa)). Zn(2+)-binding residues include Cys32, Cys35, Cys51, and Cys54. Residues 32–54 (CSNCGSALYGPELEENLEVCPKC) form a C4-type zinc finger.

This sequence belongs to the AccD/PCCB family. As to quaternary structure, acetyl-CoA carboxylase is a heterohexamer composed of biotin carboxyl carrier protein (AccB), biotin carboxylase (AccC) and two subunits each of ACCase subunit alpha (AccA) and ACCase subunit beta (AccD). Zn(2+) is required as a cofactor.

It is found in the cytoplasm. It catalyses the reaction N(6)-carboxybiotinyl-L-lysyl-[protein] + acetyl-CoA = N(6)-biotinyl-L-lysyl-[protein] + malonyl-CoA. Its pathway is lipid metabolism; malonyl-CoA biosynthesis; malonyl-CoA from acetyl-CoA: step 1/1. Functionally, component of the acetyl coenzyme A carboxylase (ACC) complex. Biotin carboxylase (BC) catalyzes the carboxylation of biotin on its carrier protein (BCCP) and then the CO(2) group is transferred by the transcarboxylase to acetyl-CoA to form malonyl-CoA. This chain is Acetyl-coenzyme A carboxylase carboxyl transferase subunit beta, found in Xanthomonas axonopodis pv. citri (strain 306).